Reading from the N-terminus, the 248-residue chain is Homeobox protein BarH-like 1 (248 aa).

Positions 135–194 (GRRSRTVFTELQLMGLEKRFEKQKYLSTPDRIDLAESLGLSQLQVKTWYQNRRMKWKKIV) form a DNA-binding region, homeobox. The disordered stretch occupies residues 197–248 (GGGLESPTKPKGRPKKNSIPTSEQLSEQERTREADRLSDGGASSLSDANQEE). Residues 223-234 (EQERTREADRLS) are compositionally biased toward basic and acidic residues. The segment covering 237–248 (GASSLSDANQEE) has biased composition (polar residues).

The protein belongs to the BAR homeobox family.

The protein localises to the nucleus. Its function is as follows. Transcription factor, is involved in craniofacial development, and in stomach organogenesis. This chain is Homeobox protein BarH-like 1 (barx1), found in Danio rerio (Zebrafish).